A 397-amino-acid chain; its full sequence is Penicillopepsin-1 (397 aa).

Positions 1–20 (MVVFSQVTVALTCFSAIASA) are cleaved as a signal peptide. Residues 21 to 71 (AAVRQEPPQGFTVNQVQKAVPGTRTVNLPGLYANALVKYGATVPATVHAAA) constitute a propeptide, activation peptide. Residues 87–394 (YLTPVTIGSS…DSEGPRLGFA (308 aa)) enclose the Peptidase A1 domain. Catalysis depends on residues aspartate 103 and aspartate 285. N-linked (GlcNAc...) asparagine glycosylation occurs at asparagine 311. Cysteine 322 and cysteine 357 form a disulfide bridge.

Belongs to the peptidase A1 family. Monomer.

The protein resides in the secreted. The enzyme catalyses Hydrolysis of proteins with broad specificity similar to that of pepsin A, preferring hydrophobic residues at P1 and P1', but also cleaving 20-Gly-|-Glu-21 in the B chain of insulin. Clots milk, and activates trypsinogen.. Its function is as follows. Secreted aspartic endopeptidase that allows assimilation of proteinaceous substrates. The scissile peptide bond is attacked by a nucleophilic water molecule activated by two aspartic residues in the active site. Shows a broad primary substrate specificity. Favors hydrophobic residues at the P1 and P1' positions, but can also activate trypsinogen and hydrolyze the B chain of insulin between positions 'Gly-20' and 'Glu-21'. This Penicillium roqueforti protein is Penicillopepsin-1.